A 310-amino-acid chain; its full sequence is Protoheme IX farnesyltransferase 2 (310 aa).

9 helical membrane passes run 25-45, 49-69, 98-118, 121-141, 145-165, 176-196, 222-242, 245-265, and 277-297; these read PGII…AAKG, LVLM…GCAI, HVLL…ALFT, LALL…SLYM, SVYG…VGYC, VILL…IAIF, IVLY…AGYT, AFMA…LKGY, and QVFG…ALDF.

This sequence belongs to the UbiA prenyltransferase family. Protoheme IX farnesyltransferase subfamily.

It localises to the cell inner membrane. The catalysed reaction is heme b + (2E,6E)-farnesyl diphosphate + H2O = Fe(II)-heme o + diphosphate. It functions in the pathway porphyrin-containing compound metabolism; heme O biosynthesis; heme O from protoheme: step 1/1. Converts heme B (protoheme IX) to heme O by substitution of the vinyl group on carbon 2 of heme B porphyrin ring with a hydroxyethyl farnesyl side group. This is Protoheme IX farnesyltransferase 2 from Shewanella sp. (strain MR-4).